Reading from the N-terminus, the 707-residue chain is SPX domain-containing membrane protein At4g11810 (707 aa).

The SPX domain maps to 2-145 (VAFGKKLKER…GYRFTNYYVK (144 aa)). 6 helical membrane-spanning segments follow: residues 252 to 272 (FMSLLLNLANTFLYMVNTYII), 283 to 303 (LGAAATVCGVVIGAMAVAQLF), 320 to 340 (LIFSSIVLFFGNLLYALAYDF), 342 to 361 (SLALLLIGRLFCGFGSARAV), 380 to 400 (AGFVSASALGMACGPALAGLL), and 416 to 436 (LPGWVMAVAWLLYLVWLAISF). Over residues 481-498 (EETEHDEEDDGDGSEESS) the composition is skewed to acidic residues. The interval 481 to 503 (EETEHDEEDDGDGSEESSDDSRK) is disordered. The next 5 helical transmembrane spans lie at 523–543 (LLIYFMLKYAMEILLSESSVV), 557–577 (IFLFCLGLTVLPVNLVVGSYI), 586–606 (ILLASEIMVCIGIVLSFHVVI), 614–634 (VISGFIMFVSAEVLEGVNLSL), and 679–699 (MLLNVTLLPSLIICVLSILAT).

It belongs to the major facilitator superfamily.

It is found in the membrane. This Arabidopsis thaliana (Mouse-ear cress) protein is SPX domain-containing membrane protein At4g11810.